The following is a 393-amino-acid chain: NADH-quinone oxidoreductase subunit H 2 (393 aa).

10 consecutive transmembrane segments (helical) span residues 13–33, 79–99, 112–132, 158–178, 186–206, 240–260, 278–298, 309–329, 333–353, and 368–388; these read VLVT…IVLV, AIFW…FAVI, VGLL…ILGG, LAFA…QGIV, VWGI…YIIA, LYFL…VTLF, LNYG…FTLI, VLLG…IPMV, MIGL…MIWF, and IGWK…AVLG.

Belongs to the complex I subunit 1 family. In terms of assembly, NDH-1 is composed of 14 different subunits. Subunits NuoA, H, J, K, L, M, N constitute the membrane sector of the complex.

Its subcellular location is the cell inner membrane. The catalysed reaction is a quinone + NADH + 5 H(+)(in) = a quinol + NAD(+) + 4 H(+)(out). Its function is as follows. NDH-1 shuttles electrons from NADH, via FMN and iron-sulfur (Fe-S) centers, to quinones in the respiratory chain. The immediate electron acceptor for the enzyme in this species is believed to be ubiquinone. Couples the redox reaction to proton translocation (for every two electrons transferred, four hydrogen ions are translocated across the cytoplasmic membrane), and thus conserves the redox energy in a proton gradient. This subunit may bind ubiquinone. The sequence is that of NADH-quinone oxidoreductase subunit H 2 from Solibacter usitatus (strain Ellin6076).